The primary structure comprises 456 residues: Trigger factor (456 aa).

Residues 192–277 (GDTVVIDFVG…IHEVKTKEVP (86 aa)) enclose the PPIase FKBP-type domain.

It belongs to the FKBP-type PPIase family. Tig subfamily.

Its subcellular location is the cytoplasm. The catalysed reaction is [protein]-peptidylproline (omega=180) = [protein]-peptidylproline (omega=0). Its function is as follows. Involved in protein export. Acts as a chaperone by maintaining the newly synthesized protein in an open conformation. Functions as a peptidyl-prolyl cis-trans isomerase. In Streptococcus pyogenes serotype M12 (strain MGAS9429), this protein is Trigger factor.